A 2230-amino-acid polypeptide reads, in one-letter code: Golgin subfamily A member 4 (2230 aa).

Positions 1 to 64 (MFKKLKQKIS…SGDTQSFAQK (64 aa)) are disordered. Ser-10 bears the Phosphoserine mark. The segment covering 12–41 (EQQQLQQALAPAQASSNSSTPTRMRSRTSS) has biased composition (low complexity). At Thr-39 the chain carries Phosphothreonine. Ser-41, Ser-71, Ser-78, and Ser-89 each carry phosphoserine. Basic and acidic residues predominate over residues 87-107 (SSSKESLVRTSSRESLNRLDL). A disordered region spans residues 87-127 (SSSKESLVRTSSRESLNRLDLDSSTASFDPPSDMDSEAEDL). An interaction with MACF1 region spans residues 133 to 203 (SLNKEQLIQR…EELQMDQQAK (71 aa)). Residues 133–2185 (SLNKEQLIQR…EYLRKVLFEY (2053 aa)) adopt a coiled-coil conformation. Ser-266 is subject to Phosphoserine. N-linked (GlcNAc...) asparagine glycans are attached at residues Asn-585 and Asn-1612. The region spanning 2168–2215 (LFGEPTEFEYLRKVLFEYMMGRETKTMAKVITTVLKFPDDQTQKILER) is the GRIP domain. A Phosphothreonine modification is found at Thr-2223.

As to quaternary structure, homodimer. Interacts with RAB6A. Interacts with GTP-bound ARL1 and ARL3. Interacts with MACF1. Directly interacts with TBC1D23. Interacts with FAM91A1; this interaction may be mediated by TBC1D23.

The protein resides in the cytoplasm. It localises to the golgi apparatus membrane. Its subcellular location is the golgi apparatus. The protein localises to the trans-Golgi network membrane. In terms of biological role, involved in vesicular trafficking at the Golgi apparatus level. May play a role in delivery of transport vesicles containing GPI-linked proteins from the trans-Golgi network through its interaction with MACF1. Involved in endosome-to-Golgi trafficking. The protein is Golgin subfamily A member 4 (GOLGA4) of Homo sapiens (Human).